A 131-amino-acid chain; its full sequence is Profilin-10 (131 aa).

A disulfide bridge connects residues Cys-13 and Cys-115. The Involved in PIP2 interaction motif lies at 81 to 97 (AVIRGKKGSGGITVKKT). Thr-111 is modified (phosphothreonine).

The protein belongs to the profilin family. Occurs in many kinds of cells as a complex with monomeric actin in a 1:1 ratio. Phosphorylated by MAP kinases.

The protein resides in the cytoplasm. It localises to the cytoskeleton. Functionally, binds to actin and affects the structure of the cytoskeleton. At high concentrations, profilin prevents the polymerization of actin, whereas it enhances it at low concentrations. The polypeptide is Profilin-10 (Zea mays (Maize)).